We begin with the raw amino-acid sequence, 569 residues long: Proline--tRNA ligase (569 aa).

It belongs to the class-II aminoacyl-tRNA synthetase family. ProS type 1 subfamily. In terms of assembly, homodimer.

It localises to the cytoplasm. The enzyme catalyses tRNA(Pro) + L-proline + ATP = L-prolyl-tRNA(Pro) + AMP + diphosphate. Functionally, catalyzes the attachment of proline to tRNA(Pro) in a two-step reaction: proline is first activated by ATP to form Pro-AMP and then transferred to the acceptor end of tRNA(Pro). As ProRS can inadvertently accommodate and process non-cognate amino acids such as alanine and cysteine, to avoid such errors it has two additional distinct editing activities against alanine. One activity is designated as 'pretransfer' editing and involves the tRNA(Pro)-independent hydrolysis of activated Ala-AMP. The other activity is designated 'posttransfer' editing and involves deacylation of mischarged Ala-tRNA(Pro). The misacylated Cys-tRNA(Pro) is not edited by ProRS. The polypeptide is Proline--tRNA ligase (Campylobacter jejuni subsp. jejuni serotype O:23/36 (strain 81-176)).